Reading from the N-terminus, the 937-residue chain is Lysosomal alpha-glucosidase (937 aa).

The signal sequence occupies residues 1-23 (MMRWPPCSRPLLGVCTLLSLALL). Positions 24–60 (GHILLHDLEVVPRELRGFSQDEIHQACQPGASSPECR) are excised as a propeptide. The 51-residue stretch at 68–118 (TQCDLPPNSRFDCAPDKGITPQQCEARGCCYMPAEWPPDAQMGQPWCFFPP) folds into the P-type domain. Intrachain disulfides connect Cys70-Cys97, Cys80-Cys96, and Cys91-Cys114. Asn127, Asn220, Asn259, and Asn377 each carry an N-linked (GlcNAc...) asparagine glycan. Residue Asp391 coordinates substrate. A glycan (N-linked (GlcNAc...) asparagine) is linked at Asn457. Asp505 acts as the Nucleophile in catalysis. The active site involves Glu508. Cys520 and Cys545 form a disulfide bridge. Substrate is bound by residues Arg587 and Asp603. Cysteines 634 and 645 form a disulfide. N-linked (GlcNAc...) asparagine glycosylation is present at Asn639. Substrate is bound at residue His661. Asn867, Asn888, and Asn910 each carry an N-linked (GlcNAc...) asparagine glycan.

This sequence belongs to the glycosyl hydrolase 31 family.

The protein localises to the lysosome. Its subcellular location is the lysosome membrane. It catalyses the reaction Hydrolysis of terminal, non-reducing (1-&gt;4)-linked alpha-D-glucose residues with release of alpha-D-glucose.. In terms of biological role, essential for the degradation of glycogen in lysosomes. Has highest activity on alpha-1,4-linked glycosidic linkages, but can also hydrolyze alpha-1,6-linked glucans. This Bos taurus (Bovine) protein is Lysosomal alpha-glucosidase (GAA).